Consider the following 215-residue polypeptide: Nitrate/nitrite response regulator protein NarP (215 aa).

Positions 8-124 constitute a Response regulatory domain; that stretch reads QVMIVDDHPL…VLLEAIRAGA (117 aa). Asp-59 carries the post-translational modification 4-aspartylphosphate. Residues 147 to 212 form the HTH luxR-type domain; it reads EEDPFSVLTE…AATILFLQQR (66 aa). The H-T-H motif DNA-binding region spans 171-190; sequence NKQIASVLNISEQTVKVHIR.

Its function is as follows. This protein activates the expression of the nitrate reductase (narGHJI) and formate dehydrogenase-N (fdnGHI) operons and represses the transcription of the fumarate reductase (frdABCD) operon in response to a nitrate/nitrite induction signal transmitted by either the NarX or NarQ proteins. The chain is Nitrate/nitrite response regulator protein NarP (narP) from Escherichia coli (strain K12).